We begin with the raw amino-acid sequence, 511 residues long: Cobyric acid synthase (511 aa).

The GATase cobBQ-type domain maps to 251–443; it reads LLDIAIICLP…IHGIFDNDVF (193 aa). Cysteine 332 (nucleophile) is an active-site residue. The active site involves histidine 435.

It belongs to the CobB/CobQ family. CobQ subfamily.

Its pathway is cofactor biosynthesis; adenosylcobalamin biosynthesis. Catalyzes amidations at positions B, D, E, and G on adenosylcobyrinic A,C-diamide. NH(2) groups are provided by glutamine, and one molecule of ATP is hydrogenolyzed for each amidation. The chain is Cobyric acid synthase from Listeria monocytogenes serotype 4b (strain F2365).